Reading from the N-terminus, the 130-residue chain is Small ribosomal subunit protein eS6 (130 aa).

The disordered stretch occupies residues 78-98 (SGPPGFRPERKGERRRKTVRG).

This sequence belongs to the eukaryotic ribosomal protein eS6 family.

This is Small ribosomal subunit protein eS6 from Methanopyrus kandleri (strain AV19 / DSM 6324 / JCM 9639 / NBRC 100938).